Reading from the N-terminus, the 609-residue chain is Spore coat protein homolog 1 (609 aa).

The N-terminal stretch at 1–17 (MKSLLFVVFIFLTTTYA) is a signal peptide. Residues Asn82, Asn397, and Asn440 are each glycosylated (N-linked (GlcNAc...) asparagine). The tract at residues 527–547 (TVTQVPEAPGTDGTPSESTAW) is disordered. Ser584 carries GPI-anchor amidated serine lipidation. A propeptide spans 585 to 609 (SSSIKRTPCILPLVILASTLFASFF) (removed in mature form).

The protein resides in the cell membrane. May play a role in cell adhesion. This is Spore coat protein homolog 1 from Rhizopus delemar (strain RA 99-880 / ATCC MYA-4621 / FGSC 9543 / NRRL 43880) (Mucormycosis agent).